A 276-amino-acid chain; its full sequence is Protein MGF 360-15R (276 aa).

It belongs to the asfivirus MGF 360 family.

Its function is as follows. Plays a role in virus cell tropism, and may be required for efficient virus replication in macrophages. This Ornithodoros (relapsing fever ticks) protein is Protein MGF 360-15R.